A 225-amino-acid polypeptide reads, in one-letter code: AA9 family lytic polysaccharide monooxygenase A (225 aa).

The first 17 residues, 1–17 (MLTTTFALLTAALGVSA), serve as a signal peptide directing secretion. Residues histidine 18 and histidine 85 each coordinate Cu(2+). 2 cysteine pairs are disulfide-bonded: cysteine 55-cysteine 173 and cysteine 143-cysteine 225. Residues histidine 159 and glutamine 168 each contribute to the O2 site. Tyrosine 170 provides a ligand contact to Cu(2+).

It belongs to the polysaccharide monooxygenase AA9 family. Requires Cu(2+) as cofactor.

The protein localises to the secreted. The enzyme catalyses [(1-&gt;4)-beta-D-glucosyl]n+m + reduced acceptor + O2 = 4-dehydro-beta-D-glucosyl-[(1-&gt;4)-beta-D-glucosyl]n-1 + [(1-&gt;4)-beta-D-glucosyl]m + acceptor + H2O.. With respect to regulation, is able to utilize various natural phenolic compounds as reducing agents. Most of these reducing agents are present in plants, either free or as lignin building blocks, such as sinapic acid, or as flavonoids such as catechin and dopamine. Phenolic compounds with 1,2-benzenediol and 1,2,3-benzenetriol moieties yield the highest release of oxidized and non-oxidized glucooligosaccharides from cellulose compared to monophenols or sulfur-containing compounds. Lytic polysaccharide monooxygenase (LPMO) that depolymerizes crystalline and amorphous polysaccharides via the oxidation of scissile alpha- or beta-(1-4)-glycosidic bonds, yielding C1 or C4 oxidation products. Catalysis by LPMOs requires the reduction of the active-site copper from Cu(II) to Cu(I) by a reducing agent and H(2)O(2) or O(2) as a cosubstrate. Shows oxidative cleavage of xylan in addition to cellulose. Shows a strong synergistic effect with endoglucanase I (EGI) with a 16-fold higher release of detected oligosaccharides. The polypeptide is AA9 family lytic polysaccharide monooxygenase A (Thermothelomyces thermophilus (strain ATCC 42464 / BCRC 31852 / DSM 1799) (Sporotrichum thermophile)).